The sequence spans 251 residues: 5'-nucleotidase SurE (251 aa).

A divalent metal cation-binding residues include aspartate 8, aspartate 9, serine 40, and asparagine 95.

It belongs to the SurE nucleotidase family. Requires a divalent metal cation as cofactor.

The protein localises to the cytoplasm. The catalysed reaction is a ribonucleoside 5'-phosphate + H2O = a ribonucleoside + phosphate. Functionally, nucleotidase that shows phosphatase activity on nucleoside 5'-monophosphates. The protein is 5'-nucleotidase SurE of Lawsonia intracellularis (strain PHE/MN1-00).